Here is a 119-residue protein sequence, read N- to C-terminus: RIIa domain-containing protein 1 (119 aa).

The RIIa domain occupies 70-104 (KEVSLLISGFFREMFLKRPDNILEFAAHYFTDPRL).

As to expression, abundant in tissues rich in highly ciliated cells, such as testis, trachea and olfactory epithelium.

The protein is RIIa domain-containing protein 1 (Riiad1) of Mus musculus (Mouse).